The sequence spans 1440 residues: Bridge-like lipid transfer protein family member 3A (1440 aa).

The Chorein N-terminal domain maps to 3–95 (GIIKKQILKH…KVEVEMKTCE (93 aa)). 3 disordered regions span residues 267–307 (SAHQ…NSSS), 430–456 (ADSLSSPRKNPLERSPSQGRQPAFQPP), and 751–780 (KPSASFGSPVQSEALAPDSMSHPRSKTEHD). A compositionally biased stretch (low complexity) spans 287-307 (SAQQSWAQAFGGSQGNSNSSS). Residues S444, S446, S755, and S758 each carry the phosphoserine modification. Positions 837 to 860 (ALLRLKEVLQRLQEQLTKDTESMT) form a coiled coil. The tract at residues 891 to 1008 (VDADSAGSDS…ETAVNGQGEL (118 aa)) is disordered. Residues 911 to 920 (SEDRELKSDA) show a composition bias toward basic and acidic residues. A compositionally biased stretch (low complexity) spans 985 to 995 (ASSSPAALKPP). 3 positions are modified to phosphoserine: S988, S1103, and S1106. The interval 1106-1180 (SFDGVSLDSS…SPAANSSVSP (75 aa)) is disordered. A compositionally biased stretch (low complexity) spans 1134-1150 (LLESESGPESVPPGSLS). The segment covering 1151 to 1180 (NVSDNAGVQGSPLVNNYGQGSPAANSSVSP) has biased composition (polar residues). Residues 1401–1435 (KELPILQKELIETKQALANANQDKEKLLQEIRKYN) are a coiled coil.

Homodimer (Potential). Interacts with UHRF1.

The protein localises to the late endosome. Tube-forming lipid transport protein which probably mediates the transfer of lipids between membranes at organelle contact sites. May be involved in the retrograde traffic of vesicle clusters in the endocytic pathway to the Golgi complex. This Homo sapiens (Human) protein is Bridge-like lipid transfer protein family member 3A.